Reading from the N-terminus, the 380-residue chain is Erythronate-4-phosphate dehydrogenase (380 aa).

Positions 45 and 66 each coordinate substrate. NAD(+) is bound by residues aspartate 146, threonine 174, 205 to 207 (ASR), and aspartate 231. Arginine 207 is a catalytic residue. Residue glutamate 236 is part of the active site. The active-site Proton donor is the histidine 253. Glycine 256 serves as a coordination point for NAD(+). Tyrosine 257 contributes to the substrate binding site.

This sequence belongs to the D-isomer specific 2-hydroxyacid dehydrogenase family. PdxB subfamily. As to quaternary structure, homodimer.

The protein resides in the cytoplasm. The enzyme catalyses 4-phospho-D-erythronate + NAD(+) = (R)-3-hydroxy-2-oxo-4-phosphooxybutanoate + NADH + H(+). Its pathway is cofactor biosynthesis; pyridoxine 5'-phosphate biosynthesis; pyridoxine 5'-phosphate from D-erythrose 4-phosphate: step 2/5. Functionally, catalyzes the oxidation of erythronate-4-phosphate to 3-hydroxy-2-oxo-4-phosphonooxybutanoate. The protein is Erythronate-4-phosphate dehydrogenase of Pseudomonas fluorescens (strain SBW25).